The sequence spans 32 residues: U3-theraphotoxin-Hhn1r (32 aa).

3 cysteine pairs are disulfide-bonded: Cys-2–Cys-15, Cys-9–Cys-20, and Cys-14–Cys-27.

It belongs to the neurotoxin 10 (Hwtx-1) family. 16 (Hntx-8) subfamily. Expressed by the venom gland.

It is found in the secreted. Ion channel inhibitor. This is U3-theraphotoxin-Hhn1r from Cyriopagopus hainanus (Chinese bird spider).